Reading from the N-terminus, the 291-residue chain is Ribosome biogenesis protein BRX1 (291 aa).

The Brix domain maps to 31–232; it reads QRTLLISSRG…VILILEGSFG (202 aa). Residue Ser-285 is modified to Phosphoserine.

The protein belongs to the BRX1 family. As to quaternary structure, part of a complex that includes BRX1, RPF1, RPF2 and SSF1 or SSF2.

Its subcellular location is the nucleus. The protein resides in the nucleolus. Its function is as follows. Required for biogenesis of the 60S ribosomal subunit. The protein is Ribosome biogenesis protein BRX1 (BRX1) of Saccharomyces cerevisiae (strain ATCC 204508 / S288c) (Baker's yeast).